Consider the following 283-residue polypeptide: Phosphatidylserine decarboxylase proenzyme (283 aa).

Active-site charge relay system; for autoendoproteolytic cleavage activity residues include D96, H152, and S250. S250 acts as the Schiff-base intermediate with substrate; via pyruvic acid; for decarboxylase activity in catalysis. Position 250 is a pyruvic acid (Ser); by autocatalysis (S250).

It belongs to the phosphatidylserine decarboxylase family. PSD-B subfamily. Prokaryotic type I sub-subfamily. In terms of assembly, heterodimer of a large membrane-associated beta subunit and a small pyruvoyl-containing alpha subunit. Requires pyruvate as cofactor. Is synthesized initially as an inactive proenzyme. Formation of the active enzyme involves a self-maturation process in which the active site pyruvoyl group is generated from an internal serine residue via an autocatalytic post-translational modification. Two non-identical subunits are generated from the proenzyme in this reaction, and the pyruvate is formed at the N-terminus of the alpha chain, which is derived from the carboxyl end of the proenzyme. The autoendoproteolytic cleavage occurs by a canonical serine protease mechanism, in which the side chain hydroxyl group of the serine supplies its oxygen atom to form the C-terminus of the beta chain, while the remainder of the serine residue undergoes an oxidative deamination to produce ammonia and the pyruvoyl prosthetic group on the alpha chain. During this reaction, the Ser that is part of the protease active site of the proenzyme becomes the pyruvoyl prosthetic group, which constitutes an essential element of the active site of the mature decarboxylase.

The protein resides in the cell membrane. It catalyses the reaction a 1,2-diacyl-sn-glycero-3-phospho-L-serine + H(+) = a 1,2-diacyl-sn-glycero-3-phosphoethanolamine + CO2. The protein operates within phospholipid metabolism; phosphatidylethanolamine biosynthesis; phosphatidylethanolamine from CDP-diacylglycerol: step 2/2. Catalyzes the formation of phosphatidylethanolamine (PtdEtn) from phosphatidylserine (PtdSer). The chain is Phosphatidylserine decarboxylase proenzyme from Acinetobacter baumannii (strain ATCC 17978 / DSM 105126 / CIP 53.77 / LMG 1025 / NCDC KC755 / 5377).